Here is a 621-residue protein sequence, read N- to C-terminus: tRNA uridine 5-carboxymethylaminomethyl modification enzyme MnmG (621 aa).

11 to 16 (GAGHAG) serves as a coordination point for FAD. 271–285 (GPRYCPSVEDKINRF) serves as a coordination point for NAD(+).

The protein belongs to the MnmG family. As to quaternary structure, homodimer. Heterotetramer of two MnmE and two MnmG subunits. FAD is required as a cofactor.

Its subcellular location is the cytoplasm. Its function is as follows. NAD-binding protein involved in the addition of a carboxymethylaminomethyl (cmnm) group at the wobble position (U34) of certain tRNAs, forming tRNA-cmnm(5)s(2)U34. This Cytophaga hutchinsonii (strain ATCC 33406 / DSM 1761 / CIP 103989 / NBRC 15051 / NCIMB 9469 / D465) protein is tRNA uridine 5-carboxymethylaminomethyl modification enzyme MnmG.